Consider the following 343-residue polypeptide: Dihydroorotase (343 aa).

Zn(2+) is bound by residues His-13 and His-15. Residues 15-17 and Asn-41 contribute to the substrate site; that span reads HLR. Zn(2+) is bound by residues Lys-99, His-136, and His-174. Lys-99 is modified (N6-carboxylysine). His-136 contacts substrate. Residue Leu-219 participates in substrate binding. Residue Asp-247 coordinates Zn(2+). Asp-247 is a catalytic residue. The substrate site is built by His-251 and Ala-263.

This sequence belongs to the metallo-dependent hydrolases superfamily. DHOase family. Class II DHOase subfamily. Homodimer. Zn(2+) is required as a cofactor.

It carries out the reaction (S)-dihydroorotate + H2O = N-carbamoyl-L-aspartate + H(+). The protein operates within pyrimidine metabolism; UMP biosynthesis via de novo pathway; (S)-dihydroorotate from bicarbonate: step 3/3. Its function is as follows. Catalyzes the reversible cyclization of carbamoyl aspartate to dihydroorotate. The protein is Dihydroorotase of Shewanella baltica (strain OS155 / ATCC BAA-1091).